Here is a 294-residue protein sequence, read N- to C-terminus: Protoheme IX farnesyltransferase (294 aa).

Helical transmembrane passes span 13 to 33 (IIFG…KGVI), 35 to 55 (YPLF…GCVF), 84 to 104 (ISLI…YAAA), 107 to 127 (LAMQ…SLYM), 132 to 152 (VYGT…GYCA), 162 to 182 (LILL…IAIF), 208 to 228 (IILY…SGYA), 229 to 249 (GYKY…MALS), and 264 to 284 (FIFS…DPHV).

It belongs to the UbiA prenyltransferase family. Protoheme IX farnesyltransferase subfamily.

It localises to the cell inner membrane. It carries out the reaction heme b + (2E,6E)-farnesyl diphosphate + H2O = Fe(II)-heme o + diphosphate. Its pathway is porphyrin-containing compound metabolism; heme O biosynthesis; heme O from protoheme: step 1/1. In terms of biological role, converts heme B (protoheme IX) to heme O by substitution of the vinyl group on carbon 2 of heme B porphyrin ring with a hydroxyethyl farnesyl side group. This Photorhabdus laumondii subsp. laumondii (strain DSM 15139 / CIP 105565 / TT01) (Photorhabdus luminescens subsp. laumondii) protein is Protoheme IX farnesyltransferase.